Consider the following 420-residue polypeptide: Glutamyl-tRNA reductase (420 aa).

Substrate contacts are provided by residues 49-52 (TCNR), Ser-109, 114-116 (EPQ), and Gln-120. Cys-50 acts as the Nucleophile in catalysis. 189–194 (GAGETI) serves as a coordination point for NADP(+).

It belongs to the glutamyl-tRNA reductase family. Homodimer.

It catalyses the reaction (S)-4-amino-5-oxopentanoate + tRNA(Glu) + NADP(+) = L-glutamyl-tRNA(Glu) + NADPH + H(+). It functions in the pathway porphyrin-containing compound metabolism; protoporphyrin-IX biosynthesis; 5-aminolevulinate from L-glutamyl-tRNA(Glu): step 1/2. Catalyzes the NADPH-dependent reduction of glutamyl-tRNA(Glu) to glutamate 1-semialdehyde (GSA). This chain is Glutamyl-tRNA reductase, found in Sodalis glossinidius (strain morsitans).